Consider the following 117-residue polypeptide: Prefoldin subunit beta (117 aa).

Belongs to the prefoldin subunit beta family. As to quaternary structure, heterohexamer of two alpha and four beta subunits.

Its subcellular location is the cytoplasm. In terms of biological role, molecular chaperone capable of stabilizing a range of proteins. Seems to fulfill an ATP-independent, HSP70-like function in archaeal de novo protein folding. The chain is Prefoldin subunit beta (pfdB) from Pyrococcus horikoshii (strain ATCC 700860 / DSM 12428 / JCM 9974 / NBRC 100139 / OT-3).